Here is a 531-residue protein sequence, read N- to C-terminus: Chaperonin GroEL 2 (531 aa).

Residues 30–33 (TLGP), 87–91 (DGTTT), G414, and D494 each bind ATP.

This sequence belongs to the chaperonin (HSP60) family. Forms a cylinder of 14 subunits composed of two heptameric rings stacked back-to-back. Interacts with the co-chaperonin GroES.

The protein localises to the cytoplasm. It catalyses the reaction ATP + H2O + a folded polypeptide = ADP + phosphate + an unfolded polypeptide.. Its function is as follows. Together with its co-chaperonin GroES, plays an essential role in assisting protein folding. The GroEL-GroES system forms a nano-cage that allows encapsulation of the non-native substrate proteins and provides a physical environment optimized to promote and accelerate protein folding. The protein is Chaperonin GroEL 2 of Cutibacterium acnes (strain DSM 16379 / KPA171202) (Propionibacterium acnes).